A 763-amino-acid chain; its full sequence is Protein translocase subunit SecA 2 (763 aa).

ATP contacts are provided by residues Q83, 101 to 105 (GEGKT), and D490.

It belongs to the SecA family. Monomer and homodimer. Part of the essential Sec protein translocation apparatus which comprises SecA, SecYEG and auxiliary proteins SecDF. Other proteins may also be involved.

Its subcellular location is the cell membrane. It is found in the cytoplasm. The enzyme catalyses ATP + H2O + cellular proteinSide 1 = ADP + phosphate + cellular proteinSide 2.. In terms of biological role, part of the Sec protein translocase complex. Interacts with the SecYEG preprotein conducting channel. Has a central role in coupling the hydrolysis of ATP to the transfer of proteins into and across the cell membrane, serving as an ATP-driven molecular motor driving the stepwise translocation of polypeptide chains across the membrane. This is Protein translocase subunit SecA 2 from Corynebacterium glutamicum (strain R).